We begin with the raw amino-acid sequence, 196 residues long: ATP-dependent Clp protease proteolytic subunit (196 aa).

The active-site Nucleophile is the serine 101. Histidine 126 is an active-site residue.

This sequence belongs to the peptidase S14 family. Component of the chloroplastic Clp protease core complex.

The protein resides in the plastid. The protein localises to the chloroplast stroma. It carries out the reaction Hydrolysis of proteins to small peptides in the presence of ATP and magnesium. alpha-casein is the usual test substrate. In the absence of ATP, only oligopeptides shorter than five residues are hydrolyzed (such as succinyl-Leu-Tyr-|-NHMec, and Leu-Tyr-Leu-|-Tyr-Trp, in which cleavage of the -Tyr-|-Leu- and -Tyr-|-Trp bonds also occurs).. Functionally, cleaves peptides in various proteins in a process that requires ATP hydrolysis. Has a chymotrypsin-like activity. Plays a major role in the degradation of misfolded proteins. The polypeptide is ATP-dependent Clp protease proteolytic subunit (Arabis hirsuta (Hairy rock-cress)).